The chain runs to 373 residues: Transcription factor NF-E2 45 kDa subunit (373 aa).

Disordered stretches follow at residues 1-22 (MPPC…GELG) and 40-60 (LNVP…PGPL). Residues 1 to 83 (MPPCPPQPNR…AGFTLPPPPY (83 aa)) form a required for interaction with MAPK8 region. The transactivation domain stretch occupies residues 1–206 (MPPCPPQPNR…PPTETPLVLE (206 aa)). 2 consecutive short sequence motifs (PXY motif) follow at residues 61 to 65 (PPPTY) and 79 to 83 (PPPPY). Residues 131–163 (LPVGQPKPQEDPESDSGLSLNYSDAESLELEGT) form a disordered region. Phosphoserine; by MAPK8 is present on Ser157. At Ser170 the chain carries Phosphoserine; by PKA. Residues 206-225 (ESSSGPVRAKPAVRGEAGSR) are disordered. The bZIP domain maps to 266–329 (LVRDIRRRGK…EVMRQQLTEL (64 aa)). The interval 268–287 (RDIRRRGKNKVAAQNCRKRK) is basic motif. The segment at 291 to 298 (IVQLEREL) is leucine-zipper. A Glycyl lysine isopeptide (Lys-Gly) (interchain with G-Cter in SUMO); alternate cross-link involves residue Lys368. A Glycyl lysine isopeptide (Lys-Gly) (interchain with G-Cter in SUMO1); alternate cross-link involves residue Lys368.

Belongs to the bZIP family. CNC subfamily. Homodimer; can bind DNA as a homodimer. Erythroid transcription activator nuclear factor erythroid-derived 2 (NF-E2), composed of a heterodimer of NFE2 and MAFK, possesses transactivation activity on beta-globin. Also forms high affinity heterodimer with MAFG; the interaction promotes erythropoiesis. Interacts (via the PXY motif 1) with ITCH (via the WW 1 domain); the interaction promotes 'Lys63'-linked ubiquitination of NFE2, translocates it to the cytoplasm and inhibits its transactivation activity. Interacts with KMT2D/MLL2; the interaction promotes transactivation of the beta-globin locus. Interacts with MAPK8 (phosphorylated form); the interaction leads to phosphorylation of NFE2 in undifferentiated cells. Post-translationally, phosphorylated on serine residues. In undifferentiated erythrocytes, phosphorylated by MAPK8 which then leads to ubiquitination and protein degradation. In terms of processing, sumoylated. Sumoylation is required for translocation to nuclear bodies PODs, anchoring to the gene loci, and transactivation of the beta-globin gene. Ubiquitinated mainly by 'Lys63'-linked ubiquitin. Polyubiquitination with 'Lys63'-linked ubiquitin by ITCH retains NFE2 in the cytoplasm preventing its transactivation activity. In undifferentiated erythrocyte, ubiquitinated after MAPK8-mediatd phosphorylation leading to protein degradation.

It localises to the nucleus. It is found in the PML body. The protein resides in the cytoplasm. Its function is as follows. Component of the NF-E2 complex essential for regulating erythroid and megakaryocytic maturation and differentiation. Binds to the hypersensitive site 2 (HS2) of the beta-globin control region (LCR). This subunit (NFE2) recognizes the TCAT/C sequence of the AP-1-like core palindrome present in a number of erythroid and megakaryocytic gene promoters. Requires MAFK or other small MAF proteins for binding to the NF-E2 motif. May play a role in all aspects of hemoglobin production from globin and heme synthesis to procurement of iron. The polypeptide is Transcription factor NF-E2 45 kDa subunit (Nfe2) (Rattus norvegicus (Rat)).